The following is a 518-amino-acid chain: MDAIKKKMQAMKVDKDGALERALVCEQEARDANTRAEKAEEEARQLQKKIQTVENELDQTQEALTLVTGKLEEKNKALQNAESEVAALNRRIQLLEEDLERSEERLGSATAKLSEASQAADESERARKILENRALADEERMDALENQLKEARFLAEEADKKYDEVARKLAMVEADLERAEERAEQGENKIVELEEELRVVGNNLKSLEVSEEKANQREEEYKNQIKTLNTRLKEAEARAEFAERSVQKLQKEVDRLEDDLIVEKERYCMIGDSLDEAFVDLIKGLEPFWNPRNPKPPTPKLPTPTPEELAAMEEARAAAEAAAAAEAEAAEAAAAAGEAGPDGAPAAPGEEKAPAKEPTPPKEPTPPPPPPPPFEYSIDLPPEGAEVPYVKNYEPPPPGSEPEPVPAAEGEAAPAAEGAAPPAEGAAPPAEGAVPPADGAAPPAEGAAPAAEGAAPPADGAAPPAEAAAAPADAAAPAAEAAPAEAPAAEATAAEAPPAEAAPAEAAPAAAEGEAPPA.

Residues 14–267 (DKDGALERAL…DDLIVEKERY (254 aa)) are a coiled coil. 2 disordered regions span residues 101–125 (RSEERLGSATAKLSEASQAADESER) and 288–518 (FWNP…APPA). The segment covering 293 to 305 (NPKPPTPKLPTPT) has biased composition (pro residues). Low complexity predominate over residues 318 to 348 (AAEAAAAAEAEAAEAAAAAGEAGPDGAPAAP). Composition is skewed to pro residues over residues 357–374 (EPTPPKEPTPPPPPPPPF) and 394–405 (EPPPPGSEPEPV). Low complexity predominate over residues 406–518 (PAAEGEAAPA…AAAEGEAPPA (113 aa)).

The protein belongs to the tropomyosin family. Homodimer. As to expression, both isoforms are only expressed in indirect flight muscles.

It is found in the cytoplasm. The protein localises to the cytoskeleton. In terms of biological role, tropomyosin, in association with the troponin complex, plays a central role in the calcium dependent regulation of muscle contraction. The protein is Tropomyosin-1, isoforms 33/34 (Tm1) of Drosophila melanogaster (Fruit fly).